The chain runs to 326 residues: Adenosine receptor A1 (326 aa).

At 1–10 (MPPYISAFQA) the chain is on the extracellular side. Residues 11–33 (AYIGIEVLIALVSVPGNVLVIWA) traverse the membrane as a helical segment. The Cytoplasmic segment spans residues 34–46 (VKVNQALRDATFC). A helical transmembrane segment spans residues 47–69 (FIVSLAVADVAVGALVIPLAILI). The Extracellular portion of the chain corresponds to 70 to 80 (NIGPQTYFHTC). A disulfide bridge links C80 with C169. Residues 81–102 (LMVACPVLILTQSSILALLAIA) form a helical membrane-spanning segment. The Cytoplasmic portion of the chain corresponds to 103 to 123 (VDRYLRVKIPLRYKTVVTQRR). A helical transmembrane segment spans residues 124-146 (AAVAIAGCWILSLVVGLTPMFGW). At 147–176 (NNLSVVEQDWRANGSVGEPVIKCEFEKVIS) the chain is on the extracellular side. N-linked (GlcNAc...) asparagine glycans are attached at residues N148 and N159. Residues 177 to 201 (MEYMVYFNFFVWVLPPLLLMVLIYL) traverse the membrane as a helical segment. Residues 202–235 (EVFYLIRKQLNKKVSASSGDPQKYYGKELKIAKS) are Cytoplasmic-facing. The chain crosses the membrane as a helical span at residues 236–259 (LALILFLFALSWLPLHILNCITLF). At 260–267 (CPTCQKPS) the chain is on the extracellular side. Residues 268 to 292 (ILIYIAIFLTHGNSAMNPIVYAFRI) form a helical membrane-spanning segment. Over 293 to 326 (HKFRVTFLKIWNDHFRCQPKPPIDEDLPEEKAED) the chain is Cytoplasmic. C309 carries S-palmitoyl cysteine lipidation.

It belongs to the G-protein coupled receptor 1 family. In terms of tissue distribution, widely expressed in brain and spinal cord.

It localises to the cell membrane. Functionally, receptor for adenosine. The activity of this receptor is mediated by G proteins which inhibit adenylyl cyclase. This is Adenosine receptor A1 (Adora1) from Rattus norvegicus (Rat).